A 541-amino-acid chain; its full sequence is MRLKMTTRNFPEREVPCDVEVERFTREVPCLSSLGDGWDCENQEGHLRQSALTLEKPGTQEAICEYPGFGEHLIASSDLPPSQRVLATNGFHAPDSNVSGLDCDPALPSYPKSYADKRTGDSDACGKGFNHSMEVIHGRNPVREKPYKYPESVKSFNHFTSLGHQKIMKRGKKSYEGKNFENIFTLSSSLNENQRNLPGEKQYRCTECGKCFKRNSSLVLHHRTHTGEKPYTCNECGKSFSKNYNLIVHQRIHTGEKPYECSKCGKAFSDGSALTQHQRIHTGEKPYECLECGKTFNRNSSLILHQRTHTGEKPYRCNECGKPFTDISHLTVHLRIHTGEKPYECSKCGKAFRDGSYLTQHERTHTGEKPFECAECGKSFNRNSHLIVHQKIHSGEKPYECKECGKTFIESAYLIRHQRIHTGEKPYGCNQCQKLFRNIAGLIRHQRTHTGEKPYECNQCGKAFRDSSCLTKHQRIHTKETPYQCPECGKSFKQNSHLAVHQRLHSREGPSRCPQCGKMFQKSSSLVRHQRAHLGEQPMET.

S50 carries the phosphoserine modification. C2H2-type zinc fingers lie at residues 203–225 (YRCTECGKCFKRNSSLVLHHRTH), 231–253 (YTCNECGKSFSKNYNLIVHQRIH), 259–281 (YECSKCGKAFSDGSALTQHQRIH), 287–309 (YECLECGKTFNRNSSLILHQRTH), 315–337 (YRCNECGKPFTDISHLTVHLRIH), 343–365 (YECSKCGKAFRDGSYLTQHERTH), 371–393 (FECAECGKSFNRNSHLIVHQKIH), 399–421 (YECKECGKTFIESAYLIRHQRIH), 427–449 (YGCNQCQKLFRNIAGLIRHQRTH), 455–477 (YECNQCGKAFRDSSCLTKHQRIH), 483–505 (YQCPECGKSFKQNSHLAVHQRLH), and 511–533 (SRCPQCGKMFQKSSSLVRHQRAH).

The protein belongs to the krueppel C2H2-type zinc-finger protein family.

It is found in the nucleus. In terms of biological role, may be involved in transcriptional regulation. This is Zinc finger protein 329 (ZNF329) from Homo sapiens (Human).